The following is a 3014-amino-acid chain: Cadherin EGF LAG seven-pass G-type receptor 1 (3014 aa).

The first 20 residues, 1-20 (MAPPPPPVLPVLLLLAAAAA), serve as a signal peptide directing secretion. Residues 22 to 2469 (PAMGLRAAAW…RENGEVLPLK (2448 aa)) lie on the Extracellular side of the membrane. Residues 205–242 (AGTPSASPSPSPPLPPNLPEARAGPARRARRGTSGRGS) are disordered. Residues 211–222 (SPSPSPPLPPNL) show a composition bias toward pro residues. Cadherin domains lie at 246–353 (PMPN…SPVF), 354–459 (EQSE…YPQF), 460–565 (SEQN…EPIF), 566–687 (VSSP…DPVF), 688–789 (TQPT…RPVF), 790–892 (QSSH…APQF), 893–999 (LWDF…APMF), 1000–1101 (EKDE…PPVL), and 1106–1224 (ILFN…SPLL). Residues Asn-403, Asn-546, Asn-634, and Asn-778 are each glycosylated (N-linked (GlcNAc...) asparagine). N-linked (GlcNAc...) asparagine glycans are attached at residues Asn-1114, Asn-1139, Asn-1213, Asn-1249, Asn-1259, and Asn-1287. Residues 1303–1361 (DDNICLREPCENYMKCVSVLRFDSSAPFLSSTTVLFRPIHPINGLRCRCPPGFTGDYCE) form the EGF-like 1; calcium-binding domain. 9 cysteine pairs are disulfide-bonded: Cys-1307/Cys-1318, Cys-1312/Cys-1349, Cys-1351/Cys-1360, Cys-1367/Cys-1378, Cys-1372/Cys-1387, Cys-1389/Cys-1398, Cys-1407/Cys-1418, Cys-1412/Cys-1428, and Cys-1430/Cys-1440. One can recognise an EGF-like 2; calcium-binding domain in the interval 1363–1399 (EIDLCYSDPCGANGRCRSREGGYTCECFEDFTGEHCE). An EGF-like 3; calcium-binding domain is found at 1403 to 1441 (RSGRCANGVCKNGGTCVNLLIGGFHCVCPPGEYERPYCE). Residues 1442–1646 (VTTRSFPPQS…IANNGTREGC (205 aa)) form the Laminin G-like 1 domain. Asn-1576, Asn-1623, and Asn-1640 each carry an N-linked (GlcNAc...) asparagine glycan. Cystine bridges form between Cys-1620–Cys-1646, Cys-1653–Cys-1664, Cys-1658–Cys-1673, Cys-1675–Cys-1684, Cys-1840–Cys-1870, Cys-1876–Cys-1887, Cys-1881–Cys-1896, Cys-1898–Cys-1907, Cys-1911–Cys-1922, Cys-1916–Cys-1934, Cys-1936–Cys-1945, Cys-1953–Cys-1966, and Cys-1968–Cys-1978. The EGF-like 4; calcium-binding domain occupies 1649 to 1685 (RRNFCDGRRCQNGGTCVNRWNMYLCECPLRFGGKNCE). Residue Asn-1666 is modified to (3R)-3-hydroxyasparagine. In terms of domain architecture, Laminin G-like 2 spans 1689–1870 (PHPQLFSGES…ALKVRVKDGC (182 aa)). The 36-residue stretch at 1872 to 1907 (VDDPCTSSPCPPNSRCHDAWEDYSCVCDKGYLGINC) folds into the EGF-like 5; calcium-binding domain. Asp-1889 is modified ((3R)-3-hydroxyaspartate). An EGF-like 6; calcium-binding domain is found at 1908–1946 (VDACHLNPCENMGACVRSPGSPQGYVCECGPSHYGPYCE). The region spanning 1947–1979 (NKLDLPCPRGWWGNPVCGPCHCAVSKGFDPDCN) is the EGF-like 7; calcium-binding domain. A glycan (N-linked (GlcNAc...) asparagine) is linked at Asn-1979. Residues 1981–2016 (TNGQCQCKENYYKLLAQDTCLPCDCFPHGSHSRTCD) form the EGF-like 8; calcium-binding domain. 5 disulfide bridges follow: Cys-1985/Cys-2000, Cys-1987/Cys-2003, Cys-2005/Cys-2015, Cys-2024/Cys-2033, and Cys-2036/Cys-2048. Residues 2003-2050 (CDCFPHGSHSRTCDMATGQCACKPGVIGRQCNRCDNPFAEVTTLGCEV) enclose the Laminin EGF-like domain. Residues Asn-2103, Asn-2122, and Asn-2257 are each glycosylated (N-linked (GlcNAc...) asparagine). The tract at residues 2291–2328 (PEEKEGPLLRPAGRRTTPQTTRPGPGTEREAPISRRRR) is disordered. The region spanning 2297-2461 (PLLRPAGRRT…AVLMDISRRE (165 aa)) is the GAIN-B domain. Positions 2300 to 2316 (RPAGRRTTPQTTRPGPG) are enriched in low complexity. 2 disulfides stabilise this stretch: Cys-2411-Cys-2443 and Cys-2431-Cys-2445. Residues 2411-2461 (CVFWNHSLAVGGTGGWSARGCELLSRNRTHVACQCSHTASFAVLMDISRRE) form a GPS region. N-linked (GlcNAc...) asparagine glycans are attached at residues Asn-2415 and Asn-2437. The chain crosses the membrane as a helical span at residues 2470 to 2490 (IVTYAAVSLSLAALLVAFVLL). Residues 2491 to 2501 (SLVRMLRSNLH) lie on the Cytoplasmic side of the membrane. Residues 2502–2522 (SIHKHLAVALFLSQLVFVIGI) form a helical membrane-spanning segment. Residue Asn-2523 is glycosylated (N-linked (GlcNAc...) asparagine). Topologically, residues 2523 to 2527 (NQTEN) are extracellular. A helical transmembrane segment spans residues 2528–2548 (PFLCTVVAILLHYIYMSTFAW). At 2549-2572 (TLVESLHVYRMLTEVRNIDTGPMR) the chain is on the cytoplasmic side. The chain crosses the membrane as a helical span at residues 2573–2593 (FYYVVGWGIPAIVTGLAVGLD). Topologically, residues 2594–2611 (PQGYGNPDFCWLSLQDTL) are extracellular. A helical transmembrane segment spans residues 2612 to 2632 (IWSFAGPIGAVIIINTVTSVL). The Cytoplasmic segment spans residues 2633–2655 (SAKVSCQRKHHYYGKKGIVSLLR). Residues 2656-2676 (TAFLLLLLISATWLLGLLAVN) form a helical membrane-spanning segment. The Extracellular segment spans residues 2677 to 2683 (RDALSFH). A helical membrane pass occupies residues 2684–2704 (YLFAIFSGLQGPFVLLFHCVL). Residues 2705-3014 (NQEVRKHLKG…QADGSDSEKP (310 aa)) are Cytoplasmic-facing. Phosphoserine is present on residues Ser-2761 and Ser-2764. 2 disordered regions span residues 2777–2939 (SSGL…PPPL) and 2954–3014 (LADC…SEKP). Over residues 2796–2806 (SCKDPPGHDSD) the composition is skewed to basic and acidic residues. Low complexity predominate over residues 2814–2825 (DEQSSSYASSHS). Residues Ser-2871 and Ser-2873 each carry the phosphoserine modification. A compositionally biased stretch (basic and acidic residues) spans 2876-2904 (PSGKPRLKVETKVSVELHREEQGSHRGEY). Over residues 2960 to 2969 (SPTSSRTSSL) the composition is skewed to low complexity. Positions 2983-2992 (PGREPGRDHL) are enriched in basic and acidic residues.

Belongs to the G-protein coupled receptor 2 family. LN-TM7 subfamily. Post-translationally, the iron and 2-oxoglutarate dependent 3-hydroxylation of aspartate and asparagine is (R) stereospecific within EGF domains.

The protein localises to the cell membrane. Its function is as follows. Receptor that may have an important role in cell/cell signaling during nervous system formation. The polypeptide is Cadherin EGF LAG seven-pass G-type receptor 1 (CELSR1) (Homo sapiens (Human)).